The following is a 581-amino-acid chain: Pentatricopeptide repeat-containing protein At1g34160 (581 aa).

PPR repeat units lie at residues 67-101, 108-142, 143-173, 174-208, 209-239, 240-270, 272-306, 307-341, and 342-372; these read LTNDWNAIIRGFAGSSHPSLAFSWYRSMLQQSSSS, DALTCSFTLKACARALCSSAMDQLHCQINRRGLSA, DSLLCTTLLDAYSKNGDLISAYKLFDEMPVR, DVASWNALIAGLVSGNRASEAMELYKRMETEGIRR, SEVTVVAALGACSHLGDVKEGENIFHGYSND, NVIVSNAAIDMYSKCGFVDKAYQVFEQFTGK, SVVTWNTMITGFAVHGEAHRALEIFDKLEDNGIKP, DDVSYLAALTACRHAGLVEYGLSVFNNMACKGVER, and NMKHYGCVVDLLSRAGRLREAHDIICSMSMI. A type E motif region spans residues 377–452; it reads LWQSLLGASE…IPGLSYIEAK (76 aa). The tract at residues 453–483 is type E(+) motif; sequence GTIHEFYNSDKSHEQWREIYEKIDEIRFKIR. The interval 484-581 is type DYW motif; it reads EDGYVAQTGL…DGSCSCRDFW (98 aa).

This sequence belongs to the PPR family. PCMP-H subfamily.

This is Pentatricopeptide repeat-containing protein At1g34160 (PCMP-H68) from Arabidopsis thaliana (Mouse-ear cress).